A 326-amino-acid polypeptide reads, in one-letter code: Acetyl-coenzyme A carboxylase carboxyl transferase subunit beta (326 aa).

Residues 32-301 (LWTKCPACGV…ILPPLNADSN (270 aa)) enclose the CoA carboxyltransferase N-terminal domain. Zn(2+) contacts are provided by Cys-36, Cys-39, Cys-55, and Cys-58. Residues 36–58 (CPACGVLTYTKDLQGNWMVCVEC) form a C4-type zinc finger.

The protein belongs to the AccD/PCCB family. Acetyl-CoA carboxylase is a heterohexamer composed of biotin carboxyl carrier protein (AccB), biotin carboxylase (AccC) and two subunits each of ACCase subunit alpha (AccA) and ACCase subunit beta (AccD). Zn(2+) serves as cofactor.

It localises to the cytoplasm. It carries out the reaction N(6)-carboxybiotinyl-L-lysyl-[protein] + acetyl-CoA = N(6)-biotinyl-L-lysyl-[protein] + malonyl-CoA. The protein operates within lipid metabolism; malonyl-CoA biosynthesis; malonyl-CoA from acetyl-CoA: step 1/1. Component of the acetyl coenzyme A carboxylase (ACC) complex. Biotin carboxylase (BC) catalyzes the carboxylation of biotin on its carrier protein (BCCP) and then the CO(2) group is transferred by the transcarboxylase to acetyl-CoA to form malonyl-CoA. The sequence is that of Acetyl-coenzyme A carboxylase carboxyl transferase subunit beta from Synechocystis sp. (strain ATCC 27184 / PCC 6803 / Kazusa).